Reading from the N-terminus, the 77-residue chain is Putative snRNP Sm-like protein (77 aa).

The region spanning 8 to 77 is the Sm domain; it reads PTLRMMLDYV…DSVVVITPAA (70 aa).

The protein belongs to the snRNP Sm proteins family.

The polypeptide is Putative snRNP Sm-like protein (Aeropyrum pernix (strain ATCC 700893 / DSM 11879 / JCM 9820 / NBRC 100138 / K1)).